The chain runs to 249 residues: Mediator of RNA polymerase II transcription subunit 6 (249 aa).

Positions 156–173 (SDRSKSDKKDANSAKDEN) are enriched in basic and acidic residues. Disordered stretches follow at residues 156–177 (SDRS…SGTL) and 198–249 (IPPM…KKSK). Residues 217–228 (TARNASEMNNAT) show a composition bias toward polar residues. Residues 233 to 249 (IKTEGVDMKPPPEKKSK) show a composition bias toward basic and acidic residues.

It belongs to the Mediator complex subunit 6 family. Component of the Mediator complex, which includes at least MED4, MED6, MED14, MED17, MED18, MED20, MED21, MED23, MED24, MED27, MED30 and MED31.

Its subcellular location is the nucleus. Functionally, component of the Mediator complex, a coactivator involved in the regulated transcription of nearly all RNA polymerase II-dependent genes. Mediator functions as a bridge to convey information from gene-specific regulatory proteins to the basal RNA polymerase II transcription machinery. Mediator is recruited to promoters by direct interactions with regulatory proteins and serves as a scaffold for the assembly of a functional preinitiation complex with RNA polymerase II and the general transcription factors. Required for activated transcription of the MtnA, MtnB and MtnD genes. The polypeptide is Mediator of RNA polymerase II transcription subunit 6 (MED6) (Drosophila melanogaster (Fruit fly)).